Consider the following 170-residue polypeptide: Lipoprotein signal peptidase (170 aa).

The next 4 helical transmembrane spans lie at 11 to 31 (LGWL…KAHF), 41 to 61 (IVVI…AAFS), 69 to 89 (WQRW…VVWL), and 95 to 115 (DDTW…GNLY). Residues aspartate 125 and aspartate 144 contribute to the active site. Residues 136 to 156 (YFPAFNFADSAITVGAIMLAL) form a helical membrane-spanning segment.

Belongs to the peptidase A8 family.

The protein resides in the cell inner membrane. The enzyme catalyses Release of signal peptides from bacterial membrane prolipoproteins. Hydrolyzes -Xaa-Yaa-Zaa-|-(S,diacylglyceryl)Cys-, in which Xaa is hydrophobic (preferably Leu), and Yaa (Ala or Ser) and Zaa (Gly or Ala) have small, neutral side chains.. It participates in protein modification; lipoprotein biosynthesis (signal peptide cleavage). In terms of biological role, this protein specifically catalyzes the removal of signal peptides from prolipoproteins. The protein is Lipoprotein signal peptidase of Pseudomonas fluorescens.